A 412-amino-acid chain; its full sequence is Poly-beta-1,6-N-acetyl-D-glucosamine synthase (412 aa).

Helical transmembrane passes span 7-28 (LLFYPIFMSIYWIVGSIYYFFI), 298-320 (IASITWVYIVICYLSFLVITANI), 332-354 (IFFFSSFTMTFINIIQFTVALFI), and 364-386 (VGLIFLSWYPTLYWVINAAVVIM).

Belongs to the glycosyltransferase 2 family.

It is found in the cell membrane. In terms of biological role, N-acetylglucosaminyltransferase that catalyzes the polymerization of single monomer units of UDP-N-acetylglucosamine to produce the linear homomer poly-beta-1,6-N-acetyl-D-glucosamine (PNAG, also referred to as PIA), a biofilm adhesin polysaccharide. Requires IcaD for full activity. This Staphylococcus epidermidis protein is Poly-beta-1,6-N-acetyl-D-glucosamine synthase (icaA).